The primary structure comprises 352 residues: MADKKALIALSGGVDSAVAALLMQGQGYELTGVTMRLWPRSRCCDEKDIEDAAEICARLGIPYTVLDYREAFRRQVVDVFVAEYQAGRTPNPCARCNQFLKFDALLAEGEKLGATMLATGHYARLAETSSGTALLRGRDHAKDQSYFLFAIGAGILSRLRFPVGGMNKDEVRAMARKHGLPVAAKQDSQDICFVPDGDYRRFLEDYAGLDMAQEGEMVDSSGQVLGHHPGTLHFTVGQRKGLGGGSDQPRYVLALDPAQNRVIVGGEDELYRGVVSLAECNWLTDLSPGETHAVTVKLRYRSRAESAMLHLLSDARAELRFREPQRAVTPGQAAVCYQGERLLGGGWIQGTE.

ATP is bound by residues 9–16 and M35; that span reads ALSGGVDS. The active-site Nucleophile is the C96. A disulfide bridge links C96 with C192. G120 is a binding site for ATP. Positions 142-144 are interaction with tRNA; that stretch reads KDQ. Residue C192 is the Cysteine persulfide intermediate of the active site. Residues 299–300 form an interaction with tRNA region; it reads RY.

This sequence belongs to the MnmA/TRMU family.

The protein resides in the cytoplasm. The enzyme catalyses S-sulfanyl-L-cysteinyl-[protein] + uridine(34) in tRNA + AH2 + ATP = 2-thiouridine(34) in tRNA + L-cysteinyl-[protein] + A + AMP + diphosphate + H(+). Functionally, catalyzes the 2-thiolation of uridine at the wobble position (U34) of tRNA, leading to the formation of s(2)U34. This is tRNA-specific 2-thiouridylase MnmA from Acidithiobacillus ferrooxidans (strain ATCC 23270 / DSM 14882 / CIP 104768 / NCIMB 8455) (Ferrobacillus ferrooxidans (strain ATCC 23270)).